We begin with the raw amino-acid sequence, 233 residues long: Large ribosomal subunit protein uL1 (233 aa).

Belongs to the universal ribosomal protein uL1 family. In terms of assembly, part of the 50S ribosomal subunit.

Its function is as follows. Binds directly to 23S rRNA. The L1 stalk is quite mobile in the ribosome, and is involved in E site tRNA release. Functionally, protein L1 is also a translational repressor protein, it controls the translation of the L11 operon by binding to its mRNA. In Vibrio cholerae serotype O1 (strain ATCC 39315 / El Tor Inaba N16961), this protein is Large ribosomal subunit protein uL1.